The following is a 258-amino-acid chain: Acyl-[acyl-carrier-protein]--UDP-N-acetylglucosamine O-acyltransferase (258 aa).

The protein belongs to the transferase hexapeptide repeat family. LpxA subfamily. As to quaternary structure, homotrimer.

The protein resides in the cytoplasm. The enzyme catalyses a (3R)-hydroxyacyl-[ACP] + UDP-N-acetyl-alpha-D-glucosamine = a UDP-3-O-[(3R)-3-hydroxyacyl]-N-acetyl-alpha-D-glucosamine + holo-[ACP]. The protein operates within glycolipid biosynthesis; lipid IV(A) biosynthesis; lipid IV(A) from (3R)-3-hydroxytetradecanoyl-[acyl-carrier-protein] and UDP-N-acetyl-alpha-D-glucosamine: step 1/6. Functionally, involved in the biosynthesis of lipid A, a phosphorylated glycolipid that anchors the lipopolysaccharide to the outer membrane of the cell. This Pseudomonas syringae pv. syringae (strain B728a) protein is Acyl-[acyl-carrier-protein]--UDP-N-acetylglucosamine O-acyltransferase.